The following is a 131-amino-acid chain: Profilin-9 (131 aa).

A disulfide bridge links C13 with C115. Positions 81–97 (AVTRGKKGAGGITIKKT) match the Involved in PIP2 interaction motif. Position 111 is a phosphothreonine (T111).

It belongs to the profilin family. Occurs in many kinds of cells as a complex with monomeric actin in a 1:1 ratio. Phosphorylated by MAP kinases.

The protein localises to the cytoplasm. It localises to the cytoskeleton. Functionally, binds to actin and affects the structure of the cytoskeleton. At high concentrations, profilin prevents the polymerization of actin, whereas it enhances it at low concentrations. This Phleum pratense (Common timothy) protein is Profilin-9.